We begin with the raw amino-acid sequence, 520 residues long: 4-hydroxyphenylacetate 3-monooxygenase oxygenase component (520 aa).

FAD contacts are provided by residues 155–157 (HAI) and threonine 196.

This sequence belongs to the FADH(2)-utilizing monooxygenase family. As to quaternary structure, homodimer. HPA 3-hydroxylase consists of a reductase component HpaC and an oxygenase component HpaB. Some form of interactions between the reductase and the oxygenase facilitate the transfer of FADH(-) to the oxygenase in P.aeruginosa, although interactions are not required in other species.

It catalyses the reaction 4-hydroxyphenylacetate + FADH2 + O2 = 3,4-dihydroxyphenylacetate + FAD + H2O + H(+). Its pathway is aromatic compound metabolism; 4-hydroxyphenylacetate degradation; pyruvate and succinate semialdehyde from 4-hydroxyphenylacetate: step 1/7. Functionally, oxygenase component of the 4-hydroxyphenylacetate (HPA) 3-hydroxylase. Catalyzes the hydroxylation of 4-hydroxyphenylacetate to form 3,4-dihydroxyphenylacetate, using FADH(-) provided by the reductase component HpaC to activate oxygen. To a lesser extent, can also use reduced FMN. In vitro, has hydroxylation activity toward tyrosol and various cinnamic acid derivatives, catalyzing the hydroxylation of p-coumaric acid, caffeic acid, ferulic acid, and coniferaldehyde. This chain is 4-hydroxyphenylacetate 3-monooxygenase oxygenase component, found in Pseudomonas aeruginosa (strain ATCC 15692 / DSM 22644 / CIP 104116 / JCM 14847 / LMG 12228 / 1C / PRS 101 / PAO1).